We begin with the raw amino-acid sequence, 423 residues long: Glutamate-1-semialdehyde 2,1-aminomutase (423 aa).

Lys-262 is subject to N6-(pyridoxal phosphate)lysine.

This sequence belongs to the class-III pyridoxal-phosphate-dependent aminotransferase family. HemL subfamily. Homodimer. Pyridoxal 5'-phosphate serves as cofactor.

The protein localises to the cytoplasm. It carries out the reaction (S)-4-amino-5-oxopentanoate = 5-aminolevulinate. It participates in porphyrin-containing compound metabolism; protoporphyrin-IX biosynthesis; 5-aminolevulinate from L-glutamyl-tRNA(Glu): step 2/2. The chain is Glutamate-1-semialdehyde 2,1-aminomutase from Campylobacter fetus subsp. fetus (strain 82-40).